The following is a 298-amino-acid chain: Cytidine deaminase (298 aa).

CMP/dCMP-type deaminase domains lie at 47-167 (TEQQ…FGPS) and 186-298 (DSDD…PLLG). 88–90 (NLE) is a binding site for substrate. Zn(2+) is bound at residue His101. Residue Glu103 is the Proton donor of the active site. Residues Cys128 and Cys131 each contribute to the Zn(2+) site.

This sequence belongs to the cytidine and deoxycytidylate deaminase family. As to quaternary structure, homodimer. It depends on Zn(2+) as a cofactor.

The enzyme catalyses cytidine + H2O + H(+) = uridine + NH4(+). It catalyses the reaction 2'-deoxycytidine + H2O + H(+) = 2'-deoxyuridine + NH4(+). Its function is as follows. This enzyme scavenges exogenous and endogenous cytidine and 2'-deoxycytidine for UMP synthesis. In Shewanella frigidimarina (strain NCIMB 400), this protein is Cytidine deaminase.